We begin with the raw amino-acid sequence, 207 residues long: Small ribosomal subunit protein uS4c (207 aa).

Residues 92 to 156 enclose the S4 RNA-binding domain; the sequence is MRLDNILFRL…YQSIITKRIE (65 aa).

Belongs to the universal ribosomal protein uS4 family. In terms of assembly, part of the 30S ribosomal subunit. Contacts protein S5. The interaction surface between S4 and S5 is involved in control of translational fidelity.

It localises to the plastid. The protein resides in the chloroplast. Functionally, one of the primary rRNA binding proteins, it binds directly to 16S rRNA where it nucleates assembly of the body of the 30S subunit. In terms of biological role, with S5 and S12 plays an important role in translational accuracy. The sequence is that of Small ribosomal subunit protein uS4c (rps4) from Equisetum arvense (Field horsetail).